A 123-amino-acid polypeptide reads, in one-letter code: Large ribosomal subunit protein uL14 (123 aa).

It belongs to the universal ribosomal protein uL14 family. In terms of assembly, part of the 50S ribosomal subunit. Forms a cluster with proteins L3 and L19. In the 70S ribosome, L14 and L19 interact and together make contacts with the 16S rRNA in bridges B5 and B8.

Binds to 23S rRNA. Forms part of two intersubunit bridges in the 70S ribosome. In Zymomonas mobilis subsp. mobilis (strain ATCC 31821 / ZM4 / CP4), this protein is Large ribosomal subunit protein uL14.